We begin with the raw amino-acid sequence, 402 residues long: Type II NADH:quinone oxidoreductase (402 aa).

FAD contacts are provided by residues 12-16 (GAGYA), 39-40 (NK), and Val83. Residue Glu172 is part of the active site. FAD is bound by residues Asp302, 319–320 (AQ), and Lys379.

Belongs to the NADH dehydrogenase family. It depends on FAD as a cofactor.

The protein localises to the cell membrane. The enzyme catalyses a quinone + NADH + H(+) = a quinol + NAD(+). Its function is as follows. Alternative, nonproton pumping NADH:quinone oxidoreductase that delivers electrons to the respiratory chain by oxidation of NADH and reduction of quinones, and contributes to the regeneration of NAD(+). The sequence is that of Type II NADH:quinone oxidoreductase from Staphylococcus saprophyticus subsp. saprophyticus (strain ATCC 15305 / DSM 20229 / NCIMB 8711 / NCTC 7292 / S-41).